The following is a 357-amino-acid chain: MFESVQGLLDEHAAIQAQLGDPAVYADQKLARKLGRRSAQLNGIVEAYHRWESIRDDLAAAKEMADEDPEFAAEVPELEASLETAAAKLRRLLIPRDPDDARNVILEVKGGEGGDEAALFAADLLRMYSRYAESRGWKTELISATESDLGGYKDVQMAVKGNSNDPAEGVYARLKFEGGVHRVQRVPVTESQGRIHTSAAGVLVLPEVDEPEELEINQNDLKIDVYRSSGPGGQSVNTTDSAVRITHLPTGIVVAMQNEKSQLQNREAGMRVLRARILAHQQEQIDAENSAQRKSQIRTMDRSERIRTYNYPENRIADHRTGYKAYNLDQVMNGDLEPVIQSAIEMDEQARLDAIGE.

N5-methylglutamine is present on Gln-234.

This sequence belongs to the prokaryotic/mitochondrial release factor family. Methylated by PrmC. Methylation increases the termination efficiency of RF1.

The protein resides in the cytoplasm. Its function is as follows. Peptide chain release factor 1 directs the termination of translation in response to the peptide chain termination codons UAG and UAA. The polypeptide is Peptide chain release factor 1 (Arthrobacter sp. (strain FB24)).